A 525-amino-acid chain; its full sequence is Putative ankyrin repeat protein FPV228 (525 aa).

9 ANK repeats span residues 39–71, 72–122, 123–152, 156–185, 190–226, 227–254, 258–287, 291–320, and 324–353; these read HPDNPLLEAVKLTNTDMIKTLLDYGICINTRDI, LGNT…ACNN, LNQTPLHLAAESNNTTLLKILLYNNAKVNI, YGNTCLHYAVRGRNIESIKLLLSYNVDVNI, YWYSALHEAVQIGDSKISRCIVSLLLCNKANVNTRCR, LNTTPIFYAINCIDTLKLLLENGADINA, NDNAVIHLATENRRYDIIKTLLDYGADVNM, RGKTPLYYATENYSYRNMKLLLDHGSNPNI, and IMNTPLFISIKCTCIENTKMLLDSGADINH.

The protein is Putative ankyrin repeat protein FPV228 of Fowlpox virus (strain NVSL) (FPV).